The primary structure comprises 56 residues: uncharacterized protein (56 aa).

Over residues 21 to 38 (HTHTPHPHHTHTHTHHTP) the composition is skewed to basic residues. Residues 21–40 (HTHTPHPHHTHTHTHHTPTH) form a disordered region.

This is an uncharacterized protein from Saccharomyces cerevisiae (strain ATCC 204508 / S288c) (Baker's yeast).